Reading from the N-terminus, the 124-residue chain is Heat-labile enterotoxin B chain (124 aa).

The signal sequence occupies residues 1–21 (MNKVKCYVLFTALLSSLCAYG). A disulfide bridge connects residues cysteine 30 and cysteine 107.

As to quaternary structure, heterohexamer of one A chain and of five B chains.

Functionally, the biological activity of the toxin is produced by the A chain, which activates intracellular adenyl cyclase. This chain is Heat-labile enterotoxin B chain (eltB), found in Escherichia coli O78:H11 (strain H10407 / ETEC).